We begin with the raw amino-acid sequence, 414 residues long: tRNA dimethylallyltransferase (414 aa).

Position 33–40 (33–40 (APTASGKT)) interacts with ATP. 35–40 (TASGKT) is a substrate binding site. Interaction with substrate tRNA stretches follow at residues 58 to 61 (DSAL), 182 to 186 (QRITR), and 266 to 271 (RCVGYR).

This sequence belongs to the IPP transferase family. Monomer. Mg(2+) serves as cofactor.

It carries out the reaction adenosine(37) in tRNA + dimethylallyl diphosphate = N(6)-dimethylallyladenosine(37) in tRNA + diphosphate. Catalyzes the transfer of a dimethylallyl group onto the adenine at position 37 in tRNAs that read codons beginning with uridine, leading to the formation of N6-(dimethylallyl)adenosine (i(6)A). This Psychrobacter cryohalolentis (strain ATCC BAA-1226 / DSM 17306 / VKM B-2378 / K5) protein is tRNA dimethylallyltransferase.